Reading from the N-terminus, the 232-residue chain is 7-cyano-7-deazaguanine synthase 1 (232 aa).

7 to 17 lines the ATP pocket; the sequence is CSGGLDSVSLA. The Zn(2+) site is built by C185, C193, C196, and C199.

It belongs to the QueC family. It depends on Zn(2+) as a cofactor.

The enzyme catalyses 7-carboxy-7-deazaguanine + NH4(+) + ATP = 7-cyano-7-deazaguanine + ADP + phosphate + H2O + H(+). It participates in purine metabolism; 7-cyano-7-deazaguanine biosynthesis. Functionally, catalyzes the ATP-dependent conversion of 7-carboxy-7-deazaguanine (CDG) to 7-cyano-7-deazaguanine (preQ(0)). This chain is 7-cyano-7-deazaguanine synthase 1, found in Mesorhizobium japonicum (strain LMG 29417 / CECT 9101 / MAFF 303099) (Mesorhizobium loti (strain MAFF 303099)).